A 538-amino-acid polypeptide reads, in one-letter code: Telomerase Cajal body protein 1 (538 aa).

Residues 1–53 (MKTSEERLVVPDSLSSDQAPAPVPQGSPVDENTDSEPVPQPCGGDDRSQVAAD) are disordered. Phosphoserine is present on residues S27 and S87. The interval 92-128 (EQELSENVSLPVEDTNQPELASGEDVEGVSEEPGPVD) is disordered. Residues 113 to 128 (SGEDVEGVSEEPGPVD) are compositionally biased toward acidic residues. WD repeat units follow at residues 154–194 (AHSE…YSAT), 210–255 (EGDT…LRAS), 260–301 (NHLD…RDCE), 311–352 (GQSG…ALLG), 353–393 (GHQG…HLLW), and 399–438 (VTTN…GDSS). 2 disordered regions span residues 471–491 (QRMF…GDLP) and 509–538 (CGGG…DGLI). T478 is modified (phosphothreonine). Residue S480 is modified to Phosphoserine. Residues 529 to 538 (RAEGCGDGLI) are compositionally biased toward gly residues.

The protein belongs to the TCAB1 family. Component of the telomerase holoenzyme complex composed of one molecule of TERT, one molecule of WRAP53/TCAB1, two molecules of H/ACA ribonucleoprotein complex subunits DKC1, NOP10, NHP2 and GAR1, and a telomerase RNA template component (TERC). The telomerase holoenzyme complex is associated with TEP1, SMG6/EST1A and POT1. Interacts with the chaperonin-containing T-complex (TRiC) complex; which mediates the folding of WRAP53/TCAB1. Interacts with COIL. Interacts with SMN1. Interacts with RNF8. Interacts with histone H2AX. In terms of tissue distribution, preferentially expressed in testis.

The protein resides in the nucleus. It localises to the cajal body. Its subcellular location is the chromosome. The protein localises to the telomere. RNA chaperone that plays a key role in telomere maintenance and RNA localization to Cajal bodies. Specifically recognizes and binds the Cajal body box (CAB box) present in both small Cajal body RNAs (scaRNAs) and telomerase RNA template component (TERC). Essential component of the telomerase holoenzyme complex, a ribonucleoprotein complex essential for the replication of chromosome termini that elongates telomeres in most eukaryotes. In the telomerase holoenzyme complex, required to stimulate the catalytic activity of the complex. Acts by specifically binding the CAB box of the TERC RNA and controlling the folding of the CR4/CR5 region of the TERC RNA, a critical step for telomerase activity. In addition, also controls telomerase holoenzyme complex localization to Cajal body. During S phase, required for delivery of TERC to telomeres during S phase and for telomerase activity. In addition to its role in telomere maintenance, also required for Cajal body formation, probably by mediating localization of scaRNAs to Cajal bodies. Also plays a role in DNA repair: relocalizes to sites of DNA double-strand breaks in response to DNA damage and promotes the repair of DNA double-strand breaks. Acts by recruiting the ubiquitin ligase RNF8 to DNA breaks and promote both homologous recombination (HR) and non-homologous end joining (NHEJ). The polypeptide is Telomerase Cajal body protein 1 (Mesocricetus auratus (Golden hamster)).